Here is a 240-residue protein sequence, read N- to C-terminus: Uridylate kinase (240 aa).

ATP is bound at residue 13 to 16 (KASG). Positions 21–26 (GGQGFG) are involved in allosteric activation by GTP. UMP is bound at residue G55. ATP-binding residues include G56 and R60. Residues D75 and 136 to 143 (TGNPFFTT) each bind UMP. 4 residues coordinate ATP: T163, Q164, Y169, and D172.

Belongs to the UMP kinase family. Homohexamer.

The protein resides in the cytoplasm. The catalysed reaction is UMP + ATP = UDP + ADP. Its pathway is pyrimidine metabolism; CTP biosynthesis via de novo pathway; UDP from UMP (UMPK route): step 1/1. Its activity is regulated as follows. Allosterically activated by GTP. Inhibited by UTP. Its function is as follows. Catalyzes the reversible phosphorylation of UMP to UDP. This chain is Uridylate kinase, found in Rhizobium johnstonii (strain DSM 114642 / LMG 32736 / 3841) (Rhizobium leguminosarum bv. viciae).